The following is a 595-amino-acid chain: Chaperone protein HscA homolog (595 aa).

This sequence belongs to the heat shock protein 70 family.

Functionally, chaperone involved in the maturation of iron-sulfur cluster-containing proteins. Has a low intrinsic ATPase activity which is markedly stimulated by HscB. This chain is Chaperone protein HscA homolog, found in Rickettsia peacockii (strain Rustic).